We begin with the raw amino-acid sequence, 596 residues long: Signal peptide peptidase-like 2B (596 aa).

Residues 1–21 (MAARWAQFLLFSLLSLPQVYC) form the signal peptide. The Lumenal segment spans residues 22 to 170 (EYGMVHVLSE…APNEPVLDYN (149 aa)). Positions 53-147 (HDLGKASLLQ…LLSYSDMLDI (95 aa)) constitute a PA domain. N93 carries an N-linked (GlcNAc...) asparagine glycan. Residues 171–191 (MVIIFVMAVGTVAIGGYWAGS) form a helical membrane-spanning segment. Residues 192 to 219 (RDVKERYMKHKRDDGAEKHEDETVDVTP) lie on the Cytoplasmic side of the membrane. Residues 220 to 240 (IMICVFVVMCCSMLVLLYFFY) traverse the membrane as a helical segment. Over 241 to 242 (DH) the chain is Lumenal. The chain crosses the membrane as a helical span at residues 243–263 (LVYVIIGIFCLAASIGLYSCL). The Cytoplasmic portion of the chain corresponds to 264 to 289 (SPFVRRFPLGKCRIPDNNLPYFHKRP). A helical membrane pass occupies residues 290 to 310 (QVRILLLAVFCISVSVVWGVF). Residues 311–315 (RNEDQ) are Lumenal-facing. Residues 316 to 336 (WAWVLQDALGIAFCLYMLKTI) form a helical membrane-spanning segment. Topologically, residues 337-344 (RLPTFKGC) are cytoplasmic. Residues 345–365 (TLLLLVLFVYDVFFVFITPFL) form a helical membrane-spanning segment. D355 is a catalytic residue. Residues 366 to 408 (TKTGESIMVEVAAGPSDSATHEKLPMVLKVPRLNSSPLALCDR) lie on the Lumenal side of the membrane. The chain crosses the membrane as a helical span at residues 409–429 (PFSLLGFGDILVPGLLVAYCH). D417 is a catalytic residue. At 430–441 (RFDIQVQSSRVY) the chain is on the cytoplasmic side. The helical transmembrane segment at 442-462 (FVACTIAYGIGLLVTFVALAL) threads the bilayer. The Lumenal segment spans residues 463-466 (MQMG). The helical transmembrane segment at 467-487 (QPALLYLVPCTLITSFSVALW) threads the bilayer. The PAL motif lies at 468 to 470 (PAL). The Cytoplasmic portion of the chain corresponds to 488 to 596 (RKELAMFWTG…SLNLEQKQLE (109 aa)). Residues 543–596 (KELHSPTLAAEEPADNDTKTEQSEVSIAQSEEAAGHNKDDLESKSLNLEQKQLE) form a disordered region. The segment covering 575–585 (AAGHNKDDLES) has biased composition (basic and acidic residues). Polar residues predominate over residues 586 to 596 (KSLNLEQKQLE).

Belongs to the peptidase A22B family.

It localises to the cell membrane. It is found in the golgi apparatus membrane. The protein localises to the lysosome membrane. The protein resides in the endosome membrane. Its subcellular location is the membrane. Its function is as follows. Intramembrane-cleaving aspartic protease (I-CLiP) that cleaves type II membrane signal peptides in the hydrophobic plane of the membrane. The chain is Signal peptide peptidase-like 2B from Gallus gallus (Chicken).